The chain runs to 303 residues: Putative band 7 family protein R614 (303 aa).

Belongs to the band 7/mec-2 family.

This chain is Putative band 7 family protein R614, found in Acanthamoeba polyphaga (Amoeba).